The following is a 306-amino-acid chain: Porphobilinogen deaminase (306 aa).

Cys239 is modified (S-(dipyrrolylmethanemethyl)cysteine).

Belongs to the HMBS family. As to quaternary structure, monomer. It depends on dipyrromethane as a cofactor.

The catalysed reaction is 4 porphobilinogen + H2O = hydroxymethylbilane + 4 NH4(+). Its pathway is porphyrin-containing compound metabolism; protoporphyrin-IX biosynthesis; coproporphyrinogen-III from 5-aminolevulinate: step 2/4. In terms of biological role, tetrapolymerization of the monopyrrole PBG into the hydroxymethylbilane pre-uroporphyrinogen in several discrete steps. This Helicobacter pylori (strain ATCC 700392 / 26695) (Campylobacter pylori) protein is Porphobilinogen deaminase (hemC).